Consider the following 1013-residue polypeptide: MEEVQPPVTPPIEPNGKRSEASLLDICEKVLSLDGSTCDEALKLFTETKRILSASMSNIGSGTREEVERFWFAFILYSVKRLSVRKEADGLSVSGDNEFNLCQILRALKLNIVDFFKELPQFVVKAGSVLGELYGADWENRLQAKEVQANFVHLSLLSKYYKRGFREFFLTYDANAEKNSANSSTYLLDSYRFGWLLFLALRNHAFSRFKDLVTCSNGVVSILAILIIHVPCRFRNFSIQDSSRFVKKGDKGVDLVASLCKIYDASEDELRIVIDKANNLVETILKKKPSPASECQTDKLDNIDPDGLTYFEDLLEETSISTSLITLEKDYYDGKGELDERVFINEEDSLLGSGSLSAGAVNITGVKRKIDALSSPARTFISPLSPHKSPAAKTNGISGATKLAATPVSTAMTTAKWLRTVISPLLPKPSPGLEHFLKSCDRDITNDVTRRAHIILEAIFPNSSLGAQCGGGSLQAVDLMDDIWAEQRRLEACKLYYRVLEAMCKAEAQILHANNLNSLLTNERFHRCMLACSAELVLATHKTITMLFPAVLERTGITAFDLSKVIESFIRHEDSLPRELRRHLNSLEERLLESMVWEKGSSMYNSLIVARPSLALEINQLGLLAEPMPSLDAIAALINFSDGANHASSVQKHETCPGQNGGIRSPKRLCTDYRSILVERNSFTSPVKDRLLALGNVKSKMLPPPLQSAFASPTRPNPGGGGETCAETGINIFFTKINKLAAVRINGMVERLQLSQQIRESVYCFFQHVLAQRTSLLFSRHIDQIILCCFYGVAKISQMSLTFREIIYNYRKQPQCKPLVFRSVYVDALQCRRQGRIGPDHVDIITFYNEIFIPAVKPLLVELGPVRNDRAVEANNKPEGQCPGSPKVSVFPSVPDMSPKKVSAVHNVYVSPLRGSKMDALISHSTKSYYACVGESTHAYQSPSKDLSAINNRLNNSSSNRKRTLNFDAEAGMVSDSMVANSLNLQNQNQNQNGSDASSSGGAAPLKTEPTDS.

Residues 406-607 are domain A; the sequence is TPVSTAMTTA…EKGSSMYNSL (202 aa). A pocket region spans residues 406-858; sequence TPVSTAMTTA…NEIFIPAVKP (453 aa). The spacer stretch occupies residues 608–727; that stretch reads IVARPSLALE…PGGGGETCAE (120 aa). A domain B region spans residues 728–858; sequence TGINIFFTKI…NEIFIPAVKP (131 aa). 2 positions are modified to phosphoserine: Ser885 and Ser898. The segment at 979-1013 is disordered; the sequence is VANSLNLQNQNQNQNGSDASSSGGAAPLKTEPTDS. Over residues 980–1004 the composition is skewed to low complexity; the sequence is ANSLNLQNQNQNQNGSDASSSGGAA.

It belongs to the retinoblastoma protein (RB) family. Interacts with the begomovirus replication-associated protein (Rep), the nanovirus Clink protein, the mastrevirus RepA protein, E2FA, E2FB and E2FC. Interacts with MSI1 through its Domain A. Interacts with ATPK1/S6K1. Interacts with SCR. Interacts with HAT2. Interacts with FAMA. Interacts with MYB124 and MYB88. Component of a DREAM-like complex which modulates a variety of developmentally regulated genes and of the mitotic genes in proliferating and differentiated cells. Associates with MYB3R3 in both earlier and later stages of leaves development. Interacts with MYB3R4 only at early stages of leaves development. Post-translationally, highly phosphorylated by CDKA-1 during G1 to S phase transition. Once hyper-phosphorylated, becomes inactive and unable to interact with E2F. In terms of processing, ubiquitinated. Subject to proteasome-dependent degradation during sucrose starvation. In terms of tissue distribution, expressed in actively dividing cells. Detected in the shoot apical meristem, in young leaf primordia and in both sporophytic tissue and the megagametophyte.

Its subcellular location is the nucleus. In terms of biological role, key regulator of entry into cell division. Acts as a transcription repressor of E2F target genes, whose activity is required for progress from the G1 to the S phase of the cell cycle. Hyperphosphorylation by CDKA-1 prevents the binding to E2F transcription factors, allowing G1 to S phase transition to operate. Forms a stable complex with E2FA that functions in maintaining cell proliferation through repression of cell differentiation. Plays a central role in the mechanism controlling meristem cell differentiation, cell fate establishment and cell fate maintenance during organogenesis and gametogenesis. Required during lateral organ production. Also involved in controlling asymmetric divisions of stem cells in different stem cell niches. Acts as a negative regulator of cell proliferation during leaf and gametophytes development. At later stages of development, restricts the progression through additional endocycles. In the leaf, plays a role in the control of the mesophyll differentiation. Another role is its implication in the regulation of imprinted genes. Acts together with MSI1 to repress the expression of MET1 during gametogenesis. This in turn activates expression of the imprinted genes FIS2 and FWA. Regulates many genes of the polycomb repressive complex 2 (PRC2). Plays an important role in meiosis affecting different aspects of this complex process. Functions as a positive regulator of the developmental switch from embryonic heterotrophic growth to autotrophic growth. Interaction with mastrevirus RepA or nanovirus Clink protein disrupts the RBR/E2F interaction and releases the transcription of replicative enzymes needed by the virus by increasing the E2F DNA-binding activity. The sequence is that of Retinoblastoma-related protein 1 (RBR1) from Arabidopsis thaliana (Mouse-ear cress).